We begin with the raw amino-acid sequence, 389 residues long: Chalcone synthase 2 (389 aa).

Cys164 is a catalytic residue.

The protein belongs to the thiolase-like superfamily. Chalcone/stilbene synthases family.

The enzyme catalyses (E)-4-coumaroyl-CoA + 3 malonyl-CoA + 3 H(+) = 2',4,4',6'-tetrahydroxychalcone + 3 CO2 + 4 CoA. It functions in the pathway secondary metabolite biosynthesis; flavonoid biosynthesis. The primary product of this enzyme is 4,2',4',6'-tetrahydroxychalcone (also termed naringenin-chalcone or chalcone) which can under specific conditions spontaneously isomerize into naringenin. The protein is Chalcone synthase 2 (CHS2) of Solanum lycopersicum (Tomato).